Reading from the N-terminus, the 263-residue chain is Leukocyte-associated immunoglobulin-like receptor 1 (263 aa).

Positions 1–21 (MSLHPVILLVLVLCLGWKINT) are cleaved as a signal peptide. The Extracellular segment spans residues 22–144 (QEGSLPDITI…TSWLKTYSIY (123 aa)). The Ig-like C2-type domain maps to 27–115 (PDITIFPNSS…TWSERSKTLE (89 aa)). N34 and N90 each carry an N-linked (GlcNAc...) asparagine glycan. A disulfide bond links C49 and C99. Residues 145 to 165 (IFTVVSVIFLLCLSALLFCFL) traverse the membrane as a helical segment. The Cytoplasmic portion of the chain corresponds to 166–263 (RHRQKKQGLP…SSTYAAIIRH (98 aa)). 2 consecutive short sequence motifs (ITIM motif) follow at residues 226–231 (VTYIQL) and 255–260 (STYAAI). Phosphotyrosine occurs at positions 228 and 257.

In terms of assembly, interacts with SH2 domains of tyrosine-protein phosphatases PTPN6 and PTPN11. The interaction with PTPN6 is constitutive. Interacts with the SH2 domain of CSK. Binds with high affinity to extracellular matrix collagens, the interaction is functionally important. Post-translationally, phosphorylation at Tyr-228 and Tyr-257 activates it. May be phosphorylated by LCK. N-glycosylated. As to expression, expressed in lymphoid organs and in cell lines of hemopoietic origin.

Its subcellular location is the cell membrane. Functionally, functions as an inhibitory receptor that plays a constitutive negative regulatory role on cytolytic function of natural killer (NK) cells, B-cells and T-cells. Activation by Tyr phosphorylation results in recruitment and activation of the phosphatases PTPN6 and PTPN11. It also reduces the increase of intracellular calcium evoked by B-cell receptor ligation. May also play its inhibitory role independently of SH2-containing phosphatases. Modulates cytokine production in CD4+ T-cells, down-regulating IL2 and IFNG production while inducing secretion of transforming growth factor beta. Also down-regulates IgG and IgE production in B-cells as well as IL8, IL10 and TNF secretion. Inhibits proliferation and induces apoptosis in myeloid leukemia cell lines as well as prevents nuclear translocation of NF-kappa-B p65 subunit/RELA and phosphorylation of I-kappa-B alpha/CHUK in these cells. Inhibits the differentiation of peripheral blood precursors towards dendritic cells. This Mus musculus (Mouse) protein is Leukocyte-associated immunoglobulin-like receptor 1 (Lair1).